The chain runs to 460 residues: Kynurenine 3-monooxygenase (460 aa).

It belongs to the aromatic-ring hydroxylase family. KMO subfamily. FAD serves as cofactor.

The protein localises to the mitochondrion. It catalyses the reaction L-kynurenine + NADPH + O2 + H(+) = 3-hydroxy-L-kynurenine + NADP(+) + H2O. The protein operates within cofactor biosynthesis; NAD(+) biosynthesis; quinolinate from L-kynurenine: step 1/3. Functionally, catalyzes the hydroxylation of L-kynurenine (L-Kyn) to form 3-hydroxy-L-kynurenine (L-3OHKyn). Required for synthesis of quinolinic acid. In Dictyostelium discoideum (Social amoeba), this protein is Kynurenine 3-monooxygenase.